The sequence spans 405 residues: Imidazolonepropionase (405 aa).

2 residues coordinate Fe(3+): histidine 73 and histidine 75. Zn(2+)-binding residues include histidine 73 and histidine 75. Residues arginine 82, tyrosine 145, and histidine 178 each contribute to the 4-imidazolone-5-propanoate site. Residue tyrosine 145 coordinates N-formimidoyl-L-glutamate. Histidine 243 serves as a coordination point for Fe(3+). Histidine 243 serves as a coordination point for Zn(2+). Glutamine 246 is a binding site for 4-imidazolone-5-propanoate. Residue aspartate 318 coordinates Fe(3+). Zn(2+) is bound at residue aspartate 318. The N-formimidoyl-L-glutamate site is built by asparagine 320 and glycine 322. A 4-imidazolone-5-propanoate-binding site is contributed by threonine 323.

The protein belongs to the metallo-dependent hydrolases superfamily. HutI family. Zn(2+) serves as cofactor. Requires Fe(3+) as cofactor.

It localises to the cytoplasm. It carries out the reaction 4-imidazolone-5-propanoate + H2O = N-formimidoyl-L-glutamate. It participates in amino-acid degradation; L-histidine degradation into L-glutamate; N-formimidoyl-L-glutamate from L-histidine: step 3/3. Functionally, catalyzes the hydrolytic cleavage of the carbon-nitrogen bond in imidazolone-5-propanoate to yield N-formimidoyl-L-glutamate. It is the third step in the universal histidine degradation pathway. The chain is Imidazolonepropionase from Brucella anthropi (strain ATCC 49188 / DSM 6882 / CCUG 24695 / JCM 21032 / LMG 3331 / NBRC 15819 / NCTC 12168 / Alc 37) (Ochrobactrum anthropi).